The primary structure comprises 207 residues: Histidine biosynthesis bifunctional protein HisIE (207 aa).

The phosphoribosyl-AMP cyclohydrolase stretch occupies residues 1 to 115 (MLSKKENLLK…FFLKENTLNF (115 aa)). The phosphoribosyl-ATP pyrophosphohydrolase stretch occupies residues 116–207 (LSKLEDLIED…NLKKRKTEKL (92 aa)).

In the N-terminal section; belongs to the PRA-CH family. The protein in the C-terminal section; belongs to the PRA-PH family.

It is found in the cytoplasm. The enzyme catalyses 1-(5-phospho-beta-D-ribosyl)-ATP + H2O = 1-(5-phospho-beta-D-ribosyl)-5'-AMP + diphosphate + H(+). It catalyses the reaction 1-(5-phospho-beta-D-ribosyl)-5'-AMP + H2O = 1-(5-phospho-beta-D-ribosyl)-5-[(5-phospho-beta-D-ribosylamino)methylideneamino]imidazole-4-carboxamide. The protein operates within amino-acid biosynthesis; L-histidine biosynthesis; L-histidine from 5-phospho-alpha-D-ribose 1-diphosphate: step 2/9. Its pathway is amino-acid biosynthesis; L-histidine biosynthesis; L-histidine from 5-phospho-alpha-D-ribose 1-diphosphate: step 3/9. The protein is Histidine biosynthesis bifunctional protein HisIE (hisI) of Buchnera aphidicola subsp. Schizaphis graminum (strain Sg).